A 206-amino-acid chain; its full sequence is MRYIVALTGGIGSGKSTVANAFADLGINVIDADIIARQVVEPGAPALHAIADHFGANMIAADGTLQRRALRERIFANPEEKNWLNALLHPLIQQETQHQIQRATSPYVLWVVPLLVENSLYKKANRVLVVDVSPETQLKRTMQRDDVTREHVEQILAAQATREARLAVADDVIDNNGAPDAIASDVARLHAYYLQLASQFVSQEKP.

The DPCK domain maps to 4–200 (IVALTGGIGS…AYYLQLASQF (197 aa)). 12 to 17 (GSGKST) lines the ATP pocket.

This sequence belongs to the CoaE family.

The protein localises to the cytoplasm. The enzyme catalyses 3'-dephospho-CoA + ATP = ADP + CoA + H(+). It participates in cofactor biosynthesis; coenzyme A biosynthesis; CoA from (R)-pantothenate: step 5/5. Its function is as follows. Catalyzes the phosphorylation of the 3'-hydroxyl group of dephosphocoenzyme A to form coenzyme A. The protein is Dephospho-CoA kinase of Escherichia coli O6:H1 (strain CFT073 / ATCC 700928 / UPEC).